A 103-amino-acid chain; its full sequence is Carboxysome shell protein CcmK3 (103 aa).

One can recognise a BMC domain in the interval Ala4–Pro91.

Belongs to the bacterial microcompartments protein family. CcmK subfamily. Forms mixed heterohexamers with CcmK4, probably with 1:5 CcmK3:CcmK4 stoichiometry. Only very weak interactions with CcmK1 and CcmK2 were seen. Bulky residues in the pore region probably preclude the formation of homohexamers by this subunit.

The protein localises to the carboxysome. In terms of biological role, a probably minor shell protein component of the carboxysome, a polyhedral inclusion where RuBisCO (ribulose bisphosphate carboxylase, rbcL-rbcS) is sequestered. This subunit probably does not form homohexamers. The chain is Carboxysome shell protein CcmK3 from Synechocystis sp. (strain ATCC 27184 / PCC 6803 / Kazusa).